Reading from the N-terminus, the 255-residue chain is Diphthine--ammonia ligase (255 aa).

The protein belongs to the Diphthine--ammonia ligase family.

It catalyses the reaction diphthine-[translation elongation factor 2] + NH4(+) + ATP = diphthamide-[translation elongation factor 2] + AMP + diphosphate + H(+). It participates in protein modification; peptidyl-diphthamide biosynthesis. Functionally, amidase that catalyzes the last step of diphthamide biosynthesis using ammonium and ATP. Diphthamide biosynthesis consists in the conversion of an L-histidine residue in the translation elongation factor eEF-2 (EEF2) to diphthamide. The chain is Diphthine--ammonia ligase (dph6) from Danio rerio (Zebrafish).